The primary structure comprises 509 residues: Diacylglycerol kinase 5 (509 aa).

Residues 36 to 187 (TPASPVLVFI…IDNWHILMRM (152 aa)) enclose the DAGKc domain. Positions 439–452 (RSVFDPSTPRHQDG) are enriched in basic and acidic residues. Positions 439–509 (RSVFDPSTPR…SNVHGWSHVL (71 aa)) are disordered. The segment covering 453–467 (AEDYDDNEDDSVAEG) has biased composition (acidic residues). Over residues 468 to 489 (EEFRKFGAADTFKIPDEGEHSN) the composition is skewed to basic and acidic residues. Over residues 490 to 500 (KKGRASRRRNS) the composition is skewed to basic residues.

Belongs to the eukaryotic diacylglycerol kinase family. Monomer.

It catalyses the reaction a 1,2-diacyl-sn-glycerol + ATP = a 1,2-diacyl-sn-glycero-3-phosphate + ADP + H(+). Phosphorylates the second messenger diacylglycerol (DAG) to generate phosphatidic acid (PA), another important signaling molecule. PA is required for plant development and responses to abiotic stress and pathogen attack. May be involved in the accumulation of PA during cold stress. In Arabidopsis thaliana (Mouse-ear cress), this protein is Diacylglycerol kinase 5 (DGK5).